A 504-amino-acid chain; its full sequence is Immunoglobulin-binding protein EibC (504 aa).

An N-terminal signal peptide occupies residues 1–26 (MSKKFTMTLLSSSLAGLLVMSGGVSA). The tract at residues 27–413 (QEEKYTVPYA…IAANTRTLQQ (387 aa)) is surface exposed passenger domain. Residues 27-453 (QEEKYTVPYA…GLFQPYSVGK (427 aa)) are Extracellular-facing. A head domain region spans residues 154–280 (DAKASGEFSV…TGTESDKTYG (127 aa)). The neck stretch occupies residues 281–296 (TRVLGGLSDGTRNSDA). The interval 297–342 (ATVGQLNRKVGGVYDDVKARITVESEKQKKYTDQKTSEVNEKVEAR) is right-handed coiled-coil (RHcc). The tract at residues 343–368 (TTVGVDSDGKLTRAEGATKTIAVNDG) is saddle domain. The interval 369–434 (LVALSGRTDR…INENHKEMKR (66 aa)) is left-handed coiled-coil (LHcc). Residues 411–438 (LQQHSARLDSQQRQINENHKEMKRAAAQ) are a coiled coil. Residues 411–453 (LQQHSARLDSQQRQINENHKEMKRAAAQSAALTGLFQPYSVGK) are outer membrane translocation of the passenger domain. 4 consecutive transmembrane segments (beta stranded) span residues 454–464 (FNATAAVGGYS), 467–478 (QALAVGVGYRFN), 481–490 (TAAKAGVAFS), and 494–504 (ASWNVGVNFEF). The interval 454 to 504 (FNATAAVGGYSDQQALAVGVGYRFNEQTAAKAGVAFSDGDASWNVGVNFEF) is translocator domain.

This sequence belongs to the autotransporter-2 (AT-2) (TC 1.B.40) family. Eib subfamily. As to quaternary structure, homotrimer; can probably form mixed heterotrimers in vivo. Will form mixed heterotrimers with EibD; these are correctly located in the outer membrane and bind IgG Fc, although less well than homotrimers. In denaturing gels runs as a band of about 200 kDa. Binds the Fc portion of immunoglobulins; binds more than 1 Fc per subunit.

It localises to the cell surface. The protein resides in the cell outer membrane. Its function is as follows. Binds (in a non-immune fashion) to the Fc portion of human IgG and less well to IgA; binding occurs on the cell surface. Confers the ability to survive exposure to human serum exposure. Binds to the Fc portion of human IgG and IgA and to whole mouse antibodies also via Fc. This chain is Immunoglobulin-binding protein EibC, found in Escherichia coli.